Here is a 474-residue protein sequence, read N- to C-terminus: tRNA-2-methylthio-N(6)-dimethylallyladenosine synthase (474 aa).

In terms of domain architecture, MTTase N-terminal spans 3-120; that stretch reads KKLHIKTWGC…LPEMINHVQG (118 aa). C12, C49, C83, C157, C161, and C164 together coordinate [4Fe-4S] cluster. Residues 143–375 form the Radical SAM core domain; it reads RAEGPTAFVS…QQRISQQAME (233 aa). Positions 378 to 441 constitute a TRAM domain; the sequence is RKMVGTVQRV…ASSLRGILLR (64 aa).

It belongs to the methylthiotransferase family. MiaB subfamily. In terms of assembly, monomer. It depends on [4Fe-4S] cluster as a cofactor.

It is found in the cytoplasm. It catalyses the reaction N(6)-dimethylallyladenosine(37) in tRNA + (sulfur carrier)-SH + AH2 + 2 S-adenosyl-L-methionine = 2-methylsulfanyl-N(6)-dimethylallyladenosine(37) in tRNA + (sulfur carrier)-H + 5'-deoxyadenosine + L-methionine + A + S-adenosyl-L-homocysteine + 2 H(+). Catalyzes the methylthiolation of N6-(dimethylallyl)adenosine (i(6)A), leading to the formation of 2-methylthio-N6-(dimethylallyl)adenosine (ms(2)i(6)A) at position 37 in tRNAs that read codons beginning with uridine. The polypeptide is tRNA-2-methylthio-N(6)-dimethylallyladenosine synthase (Yersinia pestis bv. Antiqua (strain Antiqua)).